Reading from the N-terminus, the 259-residue chain is Protein GrpE (259 aa).

Disordered stretches follow at residues 1–75 (MNSD…KGSD) and 227–259 (GPGPKAVNEEIPDQSASNQELSESVDGPTKDEN). Residues 20–40 (NNPSENFVSSSNSNESVNQVE) show a composition bias toward low complexity. Positions 46-60 (EVEHQVKNDSVDTAK) are enriched in basic and acidic residues. Positions 61-73 (EQSSTSCESNIKG) are enriched in polar residues.

It belongs to the GrpE family. In terms of assembly, homodimer.

The protein localises to the cytoplasm. Participates actively in the response to hyperosmotic and heat shock by preventing the aggregation of stress-denatured proteins, in association with DnaK and GrpE. It is the nucleotide exchange factor for DnaK and may function as a thermosensor. Unfolded proteins bind initially to DnaJ; upon interaction with the DnaJ-bound protein, DnaK hydrolyzes its bound ATP, resulting in the formation of a stable complex. GrpE releases ADP from DnaK; ATP binding to DnaK triggers the release of the substrate protein, thus completing the reaction cycle. Several rounds of ATP-dependent interactions between DnaJ, DnaK and GrpE are required for fully efficient folding. The protein is Protein GrpE of Prochlorococcus marinus (strain NATL1A).